The chain runs to 337 residues: Ketol-acid reductoisomerase (NAD(P)(+)) (337 aa).

The KARI N-terminal Rossmann domain occupies 2-187 (ARMFYDADAN…GCTRAGVIET (186 aa)). Residues 25–28 (FGSQ), Arg48, and 88–91 (DEVQ) each bind NADP(+). Residue His113 is part of the active site. Position 139 (Gly139) interacts with NADP(+). Positions 188 to 333 (SFQEETETDL…AELRGMMPWL (146 aa)) constitute a KARI C-terminal knotted domain. 4 residues coordinate Mg(2+): Asp196, Glu200, Glu232, and Glu236. Ser257 contacts substrate.

This sequence belongs to the ketol-acid reductoisomerase family. Mg(2+) serves as cofactor.

The enzyme catalyses (2R)-2,3-dihydroxy-3-methylbutanoate + NAD(+) = (2S)-2-acetolactate + NADH + H(+). It carries out the reaction (2R)-2,3-dihydroxy-3-methylbutanoate + NADP(+) = (2S)-2-acetolactate + NADPH + H(+). It participates in amino-acid biosynthesis; L-isoleucine biosynthesis; L-isoleucine from 2-oxobutanoate: step 2/4. It functions in the pathway amino-acid biosynthesis; L-valine biosynthesis; L-valine from pyruvate: step 2/4. In terms of biological role, involved in the biosynthesis of branched-chain amino acids (BCAA). Catalyzes an alkyl-migration followed by a ketol-acid reduction of (S)-2-acetolactate (S2AL) to yield (R)-2,3-dihydroxy-isovalerate. In the isomerase reaction, S2AL is rearranged via a Mg-dependent methyl migration to produce 3-hydroxy-3-methyl-2-ketobutyrate (HMKB). In the reductase reaction, this 2-ketoacid undergoes a metal-dependent reduction by NADPH or NADH to yield (R)-2,3-dihydroxy-isovalerate. This is Ketol-acid reductoisomerase (NAD(P)(+)) from Syntrophomonas wolfei subsp. wolfei (strain DSM 2245B / Goettingen).